The chain runs to 242 residues: Pyridoxine 5'-phosphate synthase (242 aa).

Residue N6 coordinates 3-amino-2-oxopropyl phosphate. Residue 8–9 (DH) participates in 1-deoxy-D-xylulose 5-phosphate binding. 3-amino-2-oxopropyl phosphate is bound at residue R17. H42 functions as the Proton acceptor in the catalytic mechanism. Residues R44 and H49 each coordinate 1-deoxy-D-xylulose 5-phosphate. E69 serves as the catalytic Proton acceptor. Residue T99 participates in 1-deoxy-D-xylulose 5-phosphate binding. H190 (proton donor) is an active-site residue. Residues G191 and 212 to 213 (GH) contribute to the 3-amino-2-oxopropyl phosphate site.

This sequence belongs to the PNP synthase family. In terms of assembly, homooctamer; tetramer of dimers.

Its subcellular location is the cytoplasm. It catalyses the reaction 3-amino-2-oxopropyl phosphate + 1-deoxy-D-xylulose 5-phosphate = pyridoxine 5'-phosphate + phosphate + 2 H2O + H(+). The protein operates within cofactor biosynthesis; pyridoxine 5'-phosphate biosynthesis; pyridoxine 5'-phosphate from D-erythrose 4-phosphate: step 5/5. Its function is as follows. Catalyzes the complicated ring closure reaction between the two acyclic compounds 1-deoxy-D-xylulose-5-phosphate (DXP) and 3-amino-2-oxopropyl phosphate (1-amino-acetone-3-phosphate or AAP) to form pyridoxine 5'-phosphate (PNP) and inorganic phosphate. The protein is Pyridoxine 5'-phosphate synthase of Neisseria meningitidis serogroup A / serotype 4A (strain DSM 15465 / Z2491).